A 544-amino-acid chain; its full sequence is CTP synthase (544 aa).

The tract at residues 1–265 (MARFIFITGG…DKAVLSAFGL (265 aa)) is amidoligase domain. S13 contributes to the CTP binding site. S13 serves as a coordination point for UTP. Position 14 to 19 (14 to 19 (SLGKGL)) interacts with ATP. Y54 provides a ligand contact to L-glutamine. D71 contributes to the ATP binding site. Mg(2+) is bound by residues D71 and E139. Residues 146–148 (DIE), 186–191 (KTKPTQ), and K222 contribute to the CTP site. UTP contacts are provided by residues 186-191 (KTKPTQ) and K222. One can recognise a Glutamine amidotransferase type-1 domain in the interval 291–543 (TIGVVGKYVG…VAAALKQSRL (253 aa)). Position 355 (G355) interacts with L-glutamine. C382 serves as the catalytic Nucleophile; for glutamine hydrolysis. Residues 383–386 (LGMQ), E406, and R471 each bind L-glutamine. Active-site residues include H516 and E518.

The protein belongs to the CTP synthase family. Homotetramer.

It catalyses the reaction UTP + L-glutamine + ATP + H2O = CTP + L-glutamate + ADP + phosphate + 2 H(+). The enzyme catalyses L-glutamine + H2O = L-glutamate + NH4(+). The catalysed reaction is UTP + NH4(+) + ATP = CTP + ADP + phosphate + 2 H(+). It functions in the pathway pyrimidine metabolism; CTP biosynthesis via de novo pathway; CTP from UDP: step 2/2. With respect to regulation, allosterically activated by GTP, when glutamine is the substrate; GTP has no effect on the reaction when ammonia is the substrate. The allosteric effector GTP functions by stabilizing the protein conformation that binds the tetrahedral intermediate(s) formed during glutamine hydrolysis. Inhibited by the product CTP, via allosteric rather than competitive inhibition. Catalyzes the ATP-dependent amination of UTP to CTP with either L-glutamine or ammonia as the source of nitrogen. Regulates intracellular CTP levels through interactions with the four ribonucleotide triphosphates. The polypeptide is CTP synthase (Zymomonas mobilis subsp. mobilis (strain ATCC 31821 / ZM4 / CP4)).